Here is a 161-residue protein sequence, read N- to C-terminus: Nucleotide-binding protein Swoo_3646 (161 aa).

This sequence belongs to the YajQ family.

Its function is as follows. Nucleotide-binding protein. The protein is Nucleotide-binding protein Swoo_3646 of Shewanella woodyi (strain ATCC 51908 / MS32).